We begin with the raw amino-acid sequence, 194 residues long: NAD(P)H-quinone oxidoreductase subunit I (194 aa).

4Fe-4S ferredoxin-type domains follow at residues 55–84 and 95–124; these read GRIHYEFDKCIACEVCVRVCPINLPVVDWE and NHYSIDFGVCIFCGNCVEYCPTNCLSMTEE. [4Fe-4S] cluster is bound by residues Cys-64, Cys-67, Cys-70, Cys-74, Cys-104, Cys-107, Cys-110, and Cys-114. Residues 173-194 are disordered; the sequence is DLPANAPRPGARPEDLVEKTEA. The segment covering 183–194 has biased composition (basic and acidic residues); that stretch reads ARPEDLVEKTEA.

This sequence belongs to the complex I 23 kDa subunit family. In terms of assembly, NDH-1 is composed of at least 11 different subunits. Requires [4Fe-4S] cluster as cofactor.

The protein resides in the cellular thylakoid membrane. The catalysed reaction is a plastoquinone + NADH + (n+1) H(+)(in) = a plastoquinol + NAD(+) + n H(+)(out). It carries out the reaction a plastoquinone + NADPH + (n+1) H(+)(in) = a plastoquinol + NADP(+) + n H(+)(out). In terms of biological role, NDH-1 shuttles electrons from an unknown electron donor, via FMN and iron-sulfur (Fe-S) centers, to quinones in the respiratory and/or the photosynthetic chain. The immediate electron acceptor for the enzyme in this species is believed to be plastoquinone. Couples the redox reaction to proton translocation, and thus conserves the redox energy in a proton gradient. The chain is NAD(P)H-quinone oxidoreductase subunit I from Nostoc sp. (strain PCC 7120 / SAG 25.82 / UTEX 2576).